Consider the following 390-residue polypeptide: Formate-dependent phosphoribosylglycinamide formyltransferase (390 aa).

N(1)-(5-phospho-beta-D-ribosyl)glycinamide is bound by residues 14 to 15 (EL) and glutamate 74. ATP contacts are provided by residues arginine 106, lysine 147, 152 to 157 (SSGKGQ), 187 to 190 (EQFI), and glutamate 195. The 194-residue stretch at 111 to 304 (DLAAQELGIT…EFDLHARAIM (194 aa)) folds into the ATP-grasp domain. Residues glutamate 263 and glutamate 275 each contribute to the Mg(2+) site. N(1)-(5-phospho-beta-D-ribosyl)glycinamide contacts are provided by residues aspartate 282, lysine 351, and 358–359 (RR).

The protein belongs to the PurK/PurT family. Homodimer.

The catalysed reaction is N(1)-(5-phospho-beta-D-ribosyl)glycinamide + formate + ATP = N(2)-formyl-N(1)-(5-phospho-beta-D-ribosyl)glycinamide + ADP + phosphate + H(+). The protein operates within purine metabolism; IMP biosynthesis via de novo pathway; N(2)-formyl-N(1)-(5-phospho-D-ribosyl)glycinamide from N(1)-(5-phospho-D-ribosyl)glycinamide (formate route): step 1/1. Its function is as follows. Involved in the de novo purine biosynthesis. Catalyzes the transfer of formate to 5-phospho-ribosyl-glycinamide (GAR), producing 5-phospho-ribosyl-N-formylglycinamide (FGAR). Formate is provided by PurU via hydrolysis of 10-formyl-tetrahydrofolate. The protein is Formate-dependent phosphoribosylglycinamide formyltransferase of Erythrobacter litoralis (strain HTCC2594).